Reading from the N-terminus, the 285-residue chain is GTP-binding protein 8 (285 aa).

An EngB-type G domain is found at 110-283; that stretch reads RQPEVCFIGR…KCFIADITGS (174 aa). GTP-binding positions include 118–125, 147–151, 165–168, 227–230, and 262–264; these read GRSNVGKS, GHTKK, DMPG, TKID, and ISA. Mg(2+) contacts are provided by serine 125 and threonine 149.

It belongs to the TRAFAC class TrmE-Era-EngA-EngB-Septin-like GTPase superfamily. EngB GTPase family. It depends on Mg(2+) as a cofactor.

The protein is GTP-binding protein 8 (Gtpbp8) of Rattus norvegicus (Rat).